The following is a 316-amino-acid chain: Beta-ketoacyl-[acyl-carrier-protein] synthase III (316 aa).

Active-site residues include C112 and H243. Residues 244 to 248 (QANLR) form an ACP-binding region. Residue N273 is part of the active site.

The protein belongs to the thiolase-like superfamily. FabH family. In terms of assembly, homodimer.

It is found in the cytoplasm. The catalysed reaction is malonyl-[ACP] + acetyl-CoA + H(+) = 3-oxobutanoyl-[ACP] + CO2 + CoA. The protein operates within lipid metabolism; fatty acid biosynthesis. In terms of biological role, catalyzes the condensation reaction of fatty acid synthesis by the addition to an acyl acceptor of two carbons from malonyl-ACP. Catalyzes the first condensation reaction which initiates fatty acid synthesis and may therefore play a role in governing the total rate of fatty acid production. Possesses both acetoacetyl-ACP synthase and acetyl transacylase activities. Its substrate specificity determines the biosynthesis of branched-chain and/or straight-chain of fatty acids. This chain is Beta-ketoacyl-[acyl-carrier-protein] synthase III, found in Histophilus somni (strain 2336) (Haemophilus somnus).